Reading from the N-terminus, the 590-residue chain is Negative elongation factor D (590 aa).

Residues 15 to 43 (YGSAAEWGDEADGGQQEDDSGEGEDDAEV) form a disordered region. Residues 21 to 43 (WGDEADGGQQEDDSGEGEDDAEV) are compositionally biased toward acidic residues.

It belongs to the NELF-D family. As to quaternary structure, the NELF complex is composed of NELFA, NELFB, NELFCD and NELFE; NELFA and NELFCD form a stable subcomplex that binds primarily through NELFCD to the N-terminus of NELFB. Binds RNA which may help to stabilize the NELF complex on nucleic acid. In vitro, the NELFA:NELFCD subcomplex binds to ssDNA and ssRNA in a sequence- and structure-dependent manner. Interacts with ARAF1. Interacts with PCF11. Interacts with NELFB. Interacts with KAT8.

It localises to the nucleus. Its function is as follows. Essential component of the NELF complex, a complex that negatively regulates the elongation of transcription by RNA polymerase II. The NELF complex, which acts via an association with the DSIF complex and causes transcriptional pausing, is counteracted by the P-TEFb kinase complex. This is Negative elongation factor D (NELFCD) from Pongo abelii (Sumatran orangutan).